The chain runs to 125 residues: MIYRLKKNIEFIIVYRRGKSFANKTLVLYVLKNKRNKDKDGIAYSKVGISVSKKVGNSVVRSKCKRLLSESFRLNYNNILKGYDCVFVARNPMRDSDYFETEKAMKNLIKKAGLYYDEENGIKSN.

The protein belongs to the RnpA family. As to quaternary structure, consists of a catalytic RNA component (M1 or rnpB) and a protein subunit.

The catalysed reaction is Endonucleolytic cleavage of RNA, removing 5'-extranucleotides from tRNA precursor.. In terms of biological role, RNaseP catalyzes the removal of the 5'-leader sequence from pre-tRNA to produce the mature 5'-terminus. It can also cleave other RNA substrates such as 4.5S RNA. The protein component plays an auxiliary but essential role in vivo by binding to the 5'-leader sequence and broadening the substrate specificity of the ribozyme. The sequence is that of Ribonuclease P protein component from Clostridium botulinum (strain Alaska E43 / Type E3).